Consider the following 312-residue polypeptide: Pseudouridine-5'-phosphate glycosidase 2 (312 aa).

Glu-31 functions as the Proton donor in the catalytic mechanism. Residues Lys-93 and Val-113 each contribute to the substrate site. Residue Asp-145 coordinates Mn(2+). Residue 147 to 149 (SAD) coordinates substrate. The Nucleophile role is filled by Lys-166.

Belongs to the pseudouridine-5'-phosphate glycosidase family. In terms of assembly, homotrimer. The cofactor is Mn(2+).

It catalyses the reaction D-ribose 5-phosphate + uracil = psi-UMP + H2O. In terms of biological role, catalyzes the reversible cleavage of pseudouridine 5'-phosphate (PsiMP) to ribose 5-phosphate and uracil. Functions biologically in the cleavage direction, as part of a pseudouridine degradation pathway. This is Pseudouridine-5'-phosphate glycosidase 2 from Photorhabdus laumondii subsp. laumondii (strain DSM 15139 / CIP 105565 / TT01) (Photorhabdus luminescens subsp. laumondii).